The sequence spans 362 residues: Probable choline-phosphate cytidylyltransferase (362 aa).

Basic and acidic residues predominate over residues 1–37; the sequence is MGEEGIKINDTHKRRIDEVEPSEKEDNVERQTKKYNF. The interval 1–79 is disordered; the sequence is MGEEGIKIND…VSPVEEEPRD (79 aa). CTP is bound by residues 109–117 and Lys147; that span reads VFDLFHIGH. Substrate-binding residues include Lys147 and Trp176. Residues 193–194, Tyr198, and 221–225 each bind CTP; these read HD and RTEGV. The tract at residues 308–362 is disordered; sequence KNPLHGSSEPSSPGPTGFLGGINRWMQRRSSSHYDLPRVGNEIAASSSSATEENH. 2 stretches are compositionally biased toward low complexity: residues 313-323 and 351-362; these read GSSEPSSPGPT and AASSSSATEENH. Residues Ser315 and Ser319 each carry the phosphoserine modification. Residue Thr323 is modified to Phosphothreonine. Ser355 is subject to Phosphoserine.

This sequence belongs to the cytidylyltransferase family.

It is found in the nucleus. It catalyses the reaction phosphocholine + CTP + H(+) = CDP-choline + diphosphate. The protein is Probable choline-phosphate cytidylyltransferase of Schizosaccharomyces pombe (strain 972 / ATCC 24843) (Fission yeast).